Reading from the N-terminus, the 675-residue chain is Putative L-type lectin-domain containing receptor kinase I.11 (675 aa).

A signal peptide spans 1 to 22 (MASERLHLILLVFFNHLTFLLS). At 23–292 (QQEEAGFIYN…PKAKQEQTSP (270 aa)) the chain is on the extracellular side. The segment at 27-263 (AGFIYNGFGQ…YQYILGWSFS (237 aa)) is legume-lectin like. Residues Asn-60, Asn-129, Asn-186, Asn-209, and Asn-230 are each glycosylated (N-linked (GlcNAc...) asparagine). The helical transmembrane segment at 293–313 (LLIVLLMLLVLIMLAVLGGIY) threads the bilayer. Topologically, residues 314-675 (LYRRKKYAEV…THTITYGDGR (362 aa)) are cytoplasmic. Positions 348–620 (FDKDGRLGKG…QVIQYINQNL (273 aa)) constitute a Protein kinase domain. Residues 354–362 (LGKGGFGEV) and Lys-376 each bind ATP. Residue Asp-472 is the Proton acceptor of the active site.

It in the C-terminal section; belongs to the protein kinase superfamily. Ser/Thr protein kinase family. The protein in the N-terminal section; belongs to the leguminous lectin family.

The protein localises to the cell membrane. It carries out the reaction L-seryl-[protein] + ATP = O-phospho-L-seryl-[protein] + ADP + H(+). It catalyses the reaction L-threonyl-[protein] + ATP = O-phospho-L-threonyl-[protein] + ADP + H(+). This chain is Putative L-type lectin-domain containing receptor kinase I.11 (LECRK111), found in Arabidopsis thaliana (Mouse-ear cress).